The sequence spans 579 residues: MTMAISSALPSPLLLAASLLLLIVQAQGITRHYEFNVQMANATRLCNTKSMVTVNGQCPGPELVAREGDRVVIRVTNNVAHNISLHWHGVRQVRTGWADGPAYITQCPIQTGQSYVYNFTVAGQRGTLWWHAHISWLRATVYGALVILPKLGVPYPFPAPHKEVPVIFGEWWNADTEEVVNQAVQTGGGPNVSDAFTINGLPGPLYNCSAQDTFKLKVKPGKTYMLRLINAALNEELFFAVANHTLTVVEVDAVYVKPFTVDTLVISPGQTTNVLLTAKPYYPGANFYMSAAPYSTARPGTFGNTTVAGILEYENPAMSPSAASFVKGLPLFKPTLPQLNDTDFVTNFTDKLRSLATPEYPAAVPQSVDKRFFFTVGLGTLPCPANMTCQGPNNTQMAASMNNVSFVLPARALLQSHFTGLSSGVYAPDFPVAPLSPFNYTGTPPNNTNVKTGTKLLVLRYNTSVELVMQDTSILGIESHPLHLHGFNFFVIGQGFGNYDAVNDPAKFNLVDPVERNTVGVPAGGWVAIRFLADNPGVWFMHCHLEAHTTWGLRMAWLVLDGSHPNQKLLPPPSDLPKC.

Positions 1–28 (MTMAISSALPSPLLLAASLLLLIVQAQG) are cleaved as a signal peptide. Plastocyanin-like domains follow at residues 36–152 (NVQM…PKLG) and 162–316 (KEVP…YENP). Residues asparagine 41 and asparagine 82 are each glycosylated (N-linked (GlcNAc...) asparagine). Residues histidine 86 and histidine 88 each contribute to the Cu cation site. An N-linked (GlcNAc...) asparagine glycan is attached at asparagine 118. Residues histidine 131 and histidine 133 each coordinate Cu cation. 12 N-linked (GlcNAc...) asparagine glycosylation sites follow: asparagine 191, asparagine 207, asparagine 243, asparagine 304, asparagine 340, asparagine 347, asparagine 386, asparagine 393, asparagine 403, asparagine 439, asparagine 446, and asparagine 462. The region spanning 429–563 (DFPVAPLSPF…RMAWLVLDGS (135 aa)) is the Plastocyanin-like 3 domain. Cu cation-binding residues include histidine 480, histidine 483, histidine 485, histidine 542, cysteine 543, histidine 544, and histidine 548.

It belongs to the multicopper oxidase family. Requires Cu cation as cofactor.

It is found in the secreted. The protein localises to the extracellular space. It localises to the apoplast. It carries out the reaction 4 hydroquinone + O2 = 4 benzosemiquinone + 2 H2O. Its function is as follows. Lignin degradation and detoxification of lignin-derived products. This chain is Laccase-4 (LAC4), found in Oryza sativa subsp. japonica (Rice).